The following is a 1125-amino-acid chain: tRNA (34-2'-O)-methyltransferase regulator WDR6 (1125 aa).

Met1 carries the post-translational modification N-acetylmethionine. WD repeat units lie at residues 89–130, 155–197, 207–246, 256–294, 295–335, 346–384, 433–475, 489–528, 567–605, 611–650, 652–692, 725–765, 767–798, 860–905, 912–958, 982–1024, and 1047–1085; these read SKGL…GNVA, TDRC…PDNK, GHVGVIFSMSYLESKGLLATASEDRSVRIWKVGDLRVPGG, GHSARVWQVKLLENYLISAGEDCVCLVWSHEGEILQAFR, GHQG…YPGL, SRPGALKAVTLAGSWRVLAVTDVGGLYLYDLEVKCWEQL, LFQG…TGKA, SKQRWHTCSAFLPPGDFLVCGDRRGSVLLFPARPCLFKKP, HGKQGVTSVTCHGGYVYSTGRDGSYYQLFVHGGRLQPVL, RGMNWIAGLRMAPDGSMVVLGFHANEFVVWSPRSHEKLHI, NCGG…IRPN, EHPD…GAAH, LTAVCNHISSVRALAVWGVGTPGGPQDSHPGL, TRYM…RILH, HHKR…DRGS, AHSC…PELE, and AHAAHVTGIKILSPKLMVSASIDQRLTFWRLGNGEPTFM.

Belongs to the WD repeat WDR6 family. As to quaternary structure, interacts with FTSJ1; the interaction is direct, and required for 2'-O-methylation of position 34 in substrate tRNAs. Interacts with IRS4. Interacts with STK11/LKB1. As to expression, expressed in hypothalamus, hippocampus, cerebrum cortex and cerebellum.

It is found in the cytoplasm. Its function is as follows. Together with methyltransferase FTSJ1, methylates the 2'-O-ribose of nucleotides at position 34 of the tRNA anticodon loop of substrate tRNAs. Required for the correct positioning of the substrate tRNA for methylation. Required to suppress amino acid starvation-induced autophagy. Enhances the STK11/LKB1-induced cell growth suppression activity. This Rattus norvegicus (Rat) protein is tRNA (34-2'-O)-methyltransferase regulator WDR6 (Wdr6).